The primary structure comprises 434 residues: Methylenetetrahydrofolate--tRNA-(uracil-5-)-methyltransferase TrmFO (434 aa).

An FAD-binding site is contributed by 9 to 14 (GAGLAG).

Belongs to the MnmG family. TrmFO subfamily. FAD serves as cofactor.

It localises to the cytoplasm. The catalysed reaction is uridine(54) in tRNA + (6R)-5,10-methylene-5,6,7,8-tetrahydrofolate + NADH + H(+) = 5-methyluridine(54) in tRNA + (6S)-5,6,7,8-tetrahydrofolate + NAD(+). It carries out the reaction uridine(54) in tRNA + (6R)-5,10-methylene-5,6,7,8-tetrahydrofolate + NADPH + H(+) = 5-methyluridine(54) in tRNA + (6S)-5,6,7,8-tetrahydrofolate + NADP(+). Catalyzes the folate-dependent formation of 5-methyl-uridine at position 54 (M-5-U54) in all tRNAs. This chain is Methylenetetrahydrofolate--tRNA-(uracil-5-)-methyltransferase TrmFO, found in Listeria welshimeri serovar 6b (strain ATCC 35897 / DSM 20650 / CCUG 15529 / CIP 8149 / NCTC 11857 / SLCC 5334 / V8).